A 268-amino-acid polypeptide reads, in one-letter code: Putative hydro-lyase Arad_8587 (268 aa).

Belongs to the D-glutamate cyclase family.

This is Putative hydro-lyase Arad_8587 from Rhizobium rhizogenes (strain K84 / ATCC BAA-868) (Agrobacterium radiobacter).